Consider the following 78-residue polypeptide: Large ribosomal subunit protein bL28B (78 aa).

The protein belongs to the bacterial ribosomal protein bL28 family.

This chain is Large ribosomal subunit protein bL28B (rpmB2), found in Streptomyces coelicolor (strain ATCC BAA-471 / A3(2) / M145).